Here is a 248-residue protein sequence, read N- to C-terminus: Homeobox protein CHOX-CAD (248 aa).

Positions 137–196 form a DNA-binding region, homeobox; it reads KDKYRVVYTDHQRLELEKEFHYSRYITIRRKAELAAALGLTERQVKIWFQNRRAKERKVN. Residues 192-248 form a disordered region; it reads ERKVNKKKLQQQSQPTSTTTPTPPAVGTPGPMGTLCSGSAPSLVSSSPLTIKEEFMP. 2 stretches are compositionally biased toward low complexity: residues 201 to 211 and 228 to 240; these read QQQSQPTSTTT and SGSA…SSPL.

The protein belongs to the Caudal homeobox family.

It is found in the nucleus. In terms of biological role, may play an important role during the early steps of organogenesis. In Gallus gallus (Chicken), this protein is Homeobox protein CHOX-CAD (CHOX-CAD1).